A 102-amino-acid polypeptide reads, in one-letter code: S-phase delaying protein 2 (102 aa).

A disordered region spans residues 43-62; sequence FPSYHKDQTDRNELPQQKHD. Positions 46–62 are enriched in basic and acidic residues; that stretch reads YHKDQTDRNELPQQKHD.

The protein belongs to the DIF1/spd1 family.

The protein resides in the cytoplasm. The protein localises to the nucleus. In terms of biological role, regulates the ribonucleotide reductase activity. The polypeptide is S-phase delaying protein 2 (spd2) (Schizosaccharomyces pombe (strain 972 / ATCC 24843) (Fission yeast)).